The primary structure comprises 976 residues: MKLKSVFRSVLKYRKTNLSLLLLITYSIITLLYIFDHERYKLNLPKEDEHPEFNDLLETAWGDLQIITASFHPYTSKENDKVHDYLLKRVLEITGNSSFASVSDDKESERSILFQQQDPFNESSRFSRVTYFESSNILVKLEGKNPEEEGLLLSAHFDSVPTGYGATDDGMGVVSLLANLKYHIKHRPNRTLIFNFNNNEEFGLLGASTYFNHSWSNLTKYVINLEGTGAGGKAVLFRTSDTSTAKIYQQSVKENPFGNSIYQQGFYSRYVRSETDYKIYEENGMRGWDVAFYKPRNLYHTIKDSIQYTSKASLWHMLHTSLQLSAYVASNSLDTADQTPACYFDFIGLKFFVISAKTLFYWNCIFLLVSPVVAIGLYLISRDRMTWKSHSWLSWTRFPLSLAAGIIVQKLFSNDIIRSNPLTFSRNYFWPISAFFTQVIFTSYVLINCSNFFFPCADMKSLSIIELFIILWTILLFTSKLLYSSDYRYTGLYPLSIFFLLSTIAAILRLLALALGMRTRKRLGRECRDHHSNYSSHSQIDMERDGQENLEQPQDQFTSSQDDQASIQDDNVSTTSAGPSHNVDEDHGMDSSSQQHDERVPLLKGSNSMEEGLSTRENSLKLEYTDYAWIIQFLLIVPIPSFILFNSVDVIMDALNHTVQEGSKATFDVLRFGMVGSILMALPILPFFYKVNYITISLTALLFLISASKTLLVHPFTNSNPLKVRFSQNIDLSQGNAASVHVLGREGNFLKPMLQDLPSIKYSSTHINCTSVTNGMELCMYDGMQPNLLSTNGNTNISSMVKVHVLHNNRNSTERSPYEPIVAELLLEVKENRACTLTFESRHQAKSPVREITVYQKKNSAPQKANITKTIKSASGINELQLHKLDFDQETYHIGVQWFPKLLTDGNLEDDKLGTKDELSVSISCYWGEYDSESVVNGTAVRKIPAFDELINYAPLSFSFTNEQKGLVIVKDAIIL.

Over 1–15 (MKLKSVFRSVLKYRK) the chain is Cytoplasmic. A helical membrane pass occupies residues 16–36 (TNLSLLLLITYSIITLLYIFD). At 37–359 (HERYKLNLPK…KFFVISAKTL (323 aa)) the chain is on the vacuolar side. N-linked (GlcNAc...) asparagine glycans are attached at residues N96 and N121. 2 residues coordinate Zn(2+): H156 and D168. N189 carries N-linked (GlcNAc...) asparagine glycosylation. Residue E200 is the Proton acceptor of the active site. Residue E201 coordinates Zn(2+). 2 N-linked (GlcNAc...) asparagine glycosylation sites follow: N212 and N217. Zn(2+) contacts are provided by E226 and H300. A helical transmembrane segment spans residues 360 to 380 (FYWNCIFLLVSPVVAIGLYLI). Topologically, residues 381-392 (SRDRMTWKSHSW) are cytoplasmic. Residues 393–412 (LSWTRFPLSLAAGIIVQKLF) traverse the membrane as a helical segment. Topologically, residues 413–428 (SNDIIRSNPLTFSRNY) are vacuolar. The chain crosses the membrane as a helical span at residues 429 to 449 (FWPISAFFTQVIFTSYVLINC). The Cytoplasmic portion of the chain corresponds to 450-461 (SNFFFPCADMKS). A helical transmembrane segment spans residues 462 to 482 (LSIIELFIILWTILLFTSKLL). Topologically, residues 483 to 496 (YSSDYRYTGLYPLS) are vacuolar. A helical transmembrane segment spans residues 497 to 517 (IFFLLSTIAAILRLLALALGM). At 518-627 (RTRKRLGREC…NSLKLEYTDY (110 aa)) the chain is on the cytoplasmic side. The disordered stretch occupies residues 528–610 (RDHHSNYSSH…PLLKGSNSME (83 aa)). Residues 549-558 (NLEQPQDQFT) show a composition bias toward polar residues. Over residues 559–570 (SSQDDQASIQDD) the composition is skewed to low complexity. Positions 582 to 601 (NVDEDHGMDSSSQQHDERVP) are enriched in basic and acidic residues. The helical transmembrane segment at 628–648 (AWIIQFLLIVPIPSFILFNSV) threads the bilayer. The Vacuolar portion of the chain corresponds to 649–668 (DVIMDALNHTVQEGSKATFD). The N-linked (GlcNAc...) asparagine glycan is linked to N656. Residues 669–689 (VLRFGMVGSILMALPILPFFY) form a helical membrane-spanning segment. Over 690–692 (KVN) the chain is Cytoplasmic. Residues 693-713 (YITISLTALLFLISASKTLLV) traverse the membrane as a helical segment. Residues 714-976 (HPFTNSNPLK…LVIVKDAIIL (263 aa)) lie on the Vacuolar side of the membrane. Residues N768, N796, N811, N866, and N937 are each glycosylated (N-linked (GlcNAc...) asparagine).

Belongs to the peptidase M28 family. The cofactor is Zn(2+).

The protein localises to the vacuole membrane. Functionally, may be involved in vacuolar sorting and osmoregulation. The sequence is that of Vacuolar membrane protease from Saccharomyces cerevisiae (strain YJM789) (Baker's yeast).